Consider the following 103-residue polypeptide: Transcriptional regulator WhiB7 (103 aa).

Residues cysteine 17, cysteine 49, cysteine 52, and cysteine 58 each coordinate [4Fe-4S] cluster. The 58-residue stretch at proline 25–isoleucine 82 folds into the 4Fe-4S Wbl-type domain. The disordered stretch occupies residues isoleucine 82–alanine 103.

Belongs to the WhiB family. [4Fe-4S] cluster is required as a cofactor. Post-translationally, the Fe-S cluster can be nitrosylated by nitric oxide (NO). In terms of processing, upon Fe-S cluster removal intramolecular disulfide bonds are formed.

The protein localises to the cytoplasm. Its function is as follows. Acts as a transcriptional regulator. Probably redox-responsive. The apo- but not holo-form probably binds DNA. Participates in maintaining a reduced cytoplasmic (MSH/MSSM) environment under normal growth conditions and directly or indirectly controls the concentration of mycothiol (MSH + MSSM). The sequence is that of Transcriptional regulator WhiB7 (whiB7) from Mycolicibacterium smegmatis (strain ATCC 700084 / mc(2)155) (Mycobacterium smegmatis).